A 1159-amino-acid polypeptide reads, in one-letter code: DNA-directed RNA polymerase subunit beta (1159 aa).

The protein belongs to the RNA polymerase beta chain family. The RNAP catalytic core consists of 2 alpha, 1 beta, 1 beta' and 1 omega subunit. When a sigma factor is associated with the core the holoenzyme is formed, which can initiate transcription.

It carries out the reaction RNA(n) + a ribonucleoside 5'-triphosphate = RNA(n+1) + diphosphate. Functionally, DNA-dependent RNA polymerase catalyzes the transcription of DNA into RNA using the four ribonucleoside triphosphates as substrates. The chain is DNA-directed RNA polymerase subunit beta from Deinococcus radiodurans (strain ATCC 13939 / DSM 20539 / JCM 16871 / CCUG 27074 / LMG 4051 / NBRC 15346 / NCIMB 9279 / VKM B-1422 / R1).